The chain runs to 108 residues: UPF0060 membrane protein SH0717 (108 aa).

A run of 4 helical transmembrane segments spans residues 5–25 (IFIF…IWLW), 31–51 (SSWL…IATF), 60–80 (VYAA…YIVD), and 86–106 (KYDL…ILPS).

It belongs to the UPF0060 family.

The protein resides in the cell membrane. In Staphylococcus haemolyticus (strain JCSC1435), this protein is UPF0060 membrane protein SH0717.